The chain runs to 154 residues: Small ribosomal subunit protein uS7c (154 aa).

It belongs to the universal ribosomal protein uS7 family. Part of the 30S ribosomal subunit.

It localises to the plastid. The protein localises to the chloroplast. Its function is as follows. One of the primary rRNA binding proteins, it binds directly to 16S rRNA where it nucleates assembly of the head domain of the 30S subunit. This is Small ribosomal subunit protein uS7c (rps7) from Pleurastrum terricola (Filamentous green alga).